The following is a 153-amino-acid chain: FAD synthase (153 aa).

Residues 9–10 (TF), 14–17 (HPGH), asparagine 92, and tyrosine 119 each bind ATP.

It belongs to the archaeal FAD synthase family. In terms of assembly, homodimer. The cofactor is a divalent metal cation.

The catalysed reaction is FMN + ATP + H(+) = FAD + diphosphate. It functions in the pathway cofactor biosynthesis; FAD biosynthesis; FAD from FMN: step 1/1. In terms of biological role, catalyzes the transfer of the AMP portion of ATP to flavin mononucleotide (FMN) to produce flavin adenine dinucleotide (FAD) coenzyme. The sequence is that of FAD synthase from Methanosphaerula palustris (strain ATCC BAA-1556 / DSM 19958 / E1-9c).